Consider the following 186-residue polypeptide: RIO-type serine/threonine-protein kinase Rio1 (186 aa).

Lysine 15 provides a ligand contact to ATP. The active-site Proton acceptor is the aspartate 124. The Mg(2+) site is built by asparagine 129 and aspartate 140. Residue aspartate 140 is the 4-aspartylphosphate intermediate of the active site.

Belongs to the protein kinase superfamily. RIO-type Ser/Thr kinase family.

It catalyses the reaction L-seryl-[protein] + ATP = O-phospho-L-seryl-[protein] + ADP + H(+). The enzyme catalyses L-threonyl-[protein] + ATP = O-phospho-L-threonyl-[protein] + ADP + H(+). The catalysed reaction is ATP + H2O = ADP + phosphate + H(+). Functionally, despite the protein kinase domain is proposed to act predominantly as an ATPase. In Thermoplasma acidophilum (strain ATCC 25905 / DSM 1728 / JCM 9062 / NBRC 15155 / AMRC-C165), this protein is RIO-type serine/threonine-protein kinase Rio1 (rio1).